The primary structure comprises 202 residues: dITP/XTP pyrophosphatase (202 aa).

8 to 13 (TKNMGK) contacts substrate. Positions 41 and 70 each coordinate Mg(2+). Aspartate 70 acts as the Proton acceptor in catalysis. Residues serine 71, 155 to 158 (FGYD), lysine 178, and 183 to 184 (HR) contribute to the substrate site.

It belongs to the HAM1 NTPase family. As to quaternary structure, homodimer. Requires Mg(2+) as cofactor.

The catalysed reaction is XTP + H2O = XMP + diphosphate + H(+). It carries out the reaction dITP + H2O = dIMP + diphosphate + H(+). The enzyme catalyses ITP + H2O = IMP + diphosphate + H(+). Functionally, pyrophosphatase that catalyzes the hydrolysis of nucleoside triphosphates to their monophosphate derivatives, with a high preference for the non-canonical purine nucleotides XTP (xanthosine triphosphate), dITP (deoxyinosine triphosphate) and ITP. Seems to function as a house-cleaning enzyme that removes non-canonical purine nucleotides from the nucleotide pool, thus preventing their incorporation into DNA/RNA and avoiding chromosomal lesions. This is dITP/XTP pyrophosphatase from Bacillus anthracis.